A 155-amino-acid chain; its full sequence is Ribosome maturation factor RimP (155 aa).

The protein belongs to the RimP family.

It is found in the cytoplasm. In terms of biological role, required for maturation of 30S ribosomal subunits. The sequence is that of Ribosome maturation factor RimP from Prochlorococcus marinus (strain MIT 9515).